The sequence spans 369 residues: Ferrochelatase (369 aa).

The Fe cation site is built by His-210 and Glu-291.

This sequence belongs to the ferrochelatase family.

Its subcellular location is the cytoplasm. It catalyses the reaction heme b + 2 H(+) = protoporphyrin IX + Fe(2+). It functions in the pathway porphyrin-containing compound metabolism; protoheme biosynthesis; protoheme from protoporphyrin-IX: step 1/1. Functionally, catalyzes the ferrous insertion into protoporphyrin IX. The chain is Ferrochelatase from Thioalkalivibrio sulfidiphilus (strain HL-EbGR7).